The following is a 441-amino-acid chain: S-adenosylmethionine synthase 1 (441 aa).

Residue Glu9 coordinates Mg(2+). His15 provides a ligand contact to ATP. Glu43 is a binding site for K(+). 2 residues coordinate L-methionine: Glu56 and Gln99. ATP contacts are provided by residues 167–169 (DGK), 235–238 (SGRF), Asp246, 252–253 (RK), Ala269, Lys273, and Lys277. L-methionine is bound at residue Asp246. Lys277 contributes to the L-methionine binding site.

It belongs to the AdoMet synthase family. In terms of assembly, homotetramer. The cofactor is Mn(2+). Mg(2+) is required as a cofactor. Requires Co(2+) as cofactor. K(+) serves as cofactor.

It is found in the cytoplasm. The enzyme catalyses L-methionine + ATP + H2O = S-adenosyl-L-methionine + phosphate + diphosphate. It functions in the pathway amino-acid biosynthesis; S-adenosyl-L-methionine biosynthesis; S-adenosyl-L-methionine from L-methionine: step 1/1. Catalyzes the formation of S-adenosylmethionine from methionine and ATP. The reaction comprises two steps that are both catalyzed by the same enzyme: formation of S-adenosylmethionine (AdoMet) and triphosphate, and subsequent hydrolysis of the triphosphate. The chain is S-adenosylmethionine synthase 1 (SAMS1) from Daucus carota (Wild carrot).